The chain runs to 392 residues: Phospho-N-acetylmuramoyl-pentapeptide-transferase (392 aa).

A run of 10 helical transmembrane segments spans residues isoleucine 28 to alanine 48, threonine 76 to leucine 96, valine 101 to leucine 121, methionine 137 to leucine 157, tryptophan 181 to threonine 201, glycine 213 to alanine 233, glycine 268 to phenylalanine 288, valine 295 to leucine 315, valine 320 to valine 340, and lysine 369 to leucine 389.

It belongs to the glycosyltransferase 4 family. MraY subfamily. It depends on Mg(2+) as a cofactor.

The protein resides in the cell inner membrane. The catalysed reaction is UDP-N-acetyl-alpha-D-muramoyl-L-alanyl-gamma-D-glutamyl-meso-2,6-diaminopimeloyl-D-alanyl-D-alanine + di-trans,octa-cis-undecaprenyl phosphate = di-trans,octa-cis-undecaprenyl diphospho-N-acetyl-alpha-D-muramoyl-L-alanyl-D-glutamyl-meso-2,6-diaminopimeloyl-D-alanyl-D-alanine + UMP. It participates in cell wall biogenesis; peptidoglycan biosynthesis. In terms of biological role, catalyzes the initial step of the lipid cycle reactions in the biosynthesis of the cell wall peptidoglycan: transfers peptidoglycan precursor phospho-MurNAc-pentapeptide from UDP-MurNAc-pentapeptide onto the lipid carrier undecaprenyl phosphate, yielding undecaprenyl-pyrophosphoryl-MurNAc-pentapeptide, known as lipid I. The polypeptide is Phospho-N-acetylmuramoyl-pentapeptide-transferase (Myxococcus xanthus (strain DK1622)).